Reading from the N-terminus, the 556-residue chain is Formate--tetrahydrofolate ligase (556 aa).

T65–T72 contributes to the ATP binding site.

It belongs to the formate--tetrahydrofolate ligase family.

It carries out the reaction (6S)-5,6,7,8-tetrahydrofolate + formate + ATP = (6R)-10-formyltetrahydrofolate + ADP + phosphate. Its pathway is one-carbon metabolism; tetrahydrofolate interconversion. This chain is Formate--tetrahydrofolate ligase, found in Alkaliphilus oremlandii (strain OhILAs) (Clostridium oremlandii (strain OhILAs)).